Consider the following 180-residue polypeptide: NADH-quinone oxidoreductase subunit I (180 aa).

4Fe-4S ferredoxin-type domains are found at residues 50 to 80 and 90 to 119; these read LTRD…LQKA and EFFR…LTPD. Residues Cys-60, Cys-63, Cys-66, Cys-70, Cys-99, Cys-102, Cys-105, and Cys-109 each coordinate [4Fe-4S] cluster.

The protein belongs to the complex I 23 kDa subunit family. As to quaternary structure, NDH-1 is composed of 13 different subunits. Subunits NuoA, H, J, K, L, M, N constitute the membrane sector of the complex. It depends on [4Fe-4S] cluster as a cofactor.

It localises to the cell inner membrane. It catalyses the reaction a quinone + NADH + 5 H(+)(in) = a quinol + NAD(+) + 4 H(+)(out). Its function is as follows. NDH-1 shuttles electrons from NADH, via FMN and iron-sulfur (Fe-S) centers, to quinones in the respiratory chain. The immediate electron acceptor for the enzyme in this species is believed to be ubiquinone. Couples the redox reaction to proton translocation (for every two electrons transferred, four hydrogen ions are translocated across the cytoplasmic membrane), and thus conserves the redox energy in a proton gradient. The chain is NADH-quinone oxidoreductase subunit I from Yersinia pseudotuberculosis serotype O:1b (strain IP 31758).